The primary structure comprises 518 residues: MTHLQFDNRLRAELPGDPEEGPRRREVLAAWSAVQPTPVAAPTLLAYSADVAQRLGLRAEDLASPRFAEVFGGNALYPGMQPWAVNYGGHQFGHWAGQLGDGRAISLGEAIGVDGGRYELQLKGAGPTPYSRGADGRAVLRSSIREFLCSEAMHYLGVPTTRALSLVGTGDAVVRDMFYDGHPRREPGAIVCRVAPSFIRFGNFELPAARGDVDLLRQWVDFTLARDFPDLPGSGEDRIASWLGQVCERTAVMVAHWMRVGFVHGVMNTDNMSILGLTIDYGPYGWVDDYDPDWTPNTTDAQGRRYRFGTQPQVAYWNLGRLAQALSPLFGDAAPLQAGLDQFRDTYLACDRRDTAAKLGLAECQDEDLHLIDDLRALMREAEMDMTLTFRGLVDLSPQQPDASVLREAFYDETKRAAQAPALGAWLQRYAARCLQDGASDAVRASRMRAANPRYVLRNYLAQQAIDQAEQGDLSGVHALLEVMQRPYDDQPRRESFAAKRPDWARDRAGCSMLSCSS.

The interval 1–22 (MTHLQFDNRLRAELPGDPEEGP) is disordered. ATP contacts are provided by glycine 100, glycine 102, arginine 103, lysine 123, aspartate 135, glycine 136, arginine 193, and arginine 200. Residue aspartate 270 is the Proton acceptor of the active site. Mg(2+) is bound by residues asparagine 271 and aspartate 280. Aspartate 280 lines the ATP pocket.

The protein belongs to the SELO family. It depends on Mg(2+) as a cofactor. The cofactor is Mn(2+).

It carries out the reaction L-seryl-[protein] + ATP = 3-O-(5'-adenylyl)-L-seryl-[protein] + diphosphate. The enzyme catalyses L-threonyl-[protein] + ATP = 3-O-(5'-adenylyl)-L-threonyl-[protein] + diphosphate. It catalyses the reaction L-tyrosyl-[protein] + ATP = O-(5'-adenylyl)-L-tyrosyl-[protein] + diphosphate. The catalysed reaction is L-histidyl-[protein] + UTP = N(tele)-(5'-uridylyl)-L-histidyl-[protein] + diphosphate. It carries out the reaction L-seryl-[protein] + UTP = O-(5'-uridylyl)-L-seryl-[protein] + diphosphate. The enzyme catalyses L-tyrosyl-[protein] + UTP = O-(5'-uridylyl)-L-tyrosyl-[protein] + diphosphate. Nucleotidyltransferase involved in the post-translational modification of proteins. It can catalyze the addition of adenosine monophosphate (AMP) or uridine monophosphate (UMP) to a protein, resulting in modifications known as AMPylation and UMPylation. The polypeptide is Protein nucleotidyltransferase YdiU (Xanthomonas campestris pv. campestris (strain 8004)).